Consider the following 502-residue polypeptide: Glycerol kinase (502 aa).

Threonine 14 is an ADP binding site. Threonine 14, threonine 15, and serine 16 together coordinate ATP. Threonine 14 provides a ligand contact to sn-glycerol 3-phosphate. ADP is bound at residue arginine 18. Positions 84, 85, and 136 each coordinate sn-glycerol 3-phosphate. Arginine 84, glutamate 85, and tyrosine 136 together coordinate glycerol. At histidine 232 the chain carries Phosphohistidine; by HPr. Aspartate 246 contacts sn-glycerol 3-phosphate. 2 residues coordinate glycerol: aspartate 246 and glutamine 247. The ADP site is built by threonine 268 and glycine 311. Residues threonine 268, glycine 311, glutamine 315, and glycine 412 each coordinate ATP. Positions 412 and 416 each coordinate ADP.

The protein belongs to the FGGY kinase family. Homotetramer and homodimer (in equilibrium). In terms of processing, the phosphoenolpyruvate-dependent sugar phosphotransferase system (PTS), including enzyme I, and histidine-containing protein (HPr) are required for the phosphorylation, which leads to the activation of the enzyme.

It carries out the reaction glycerol + ATP = sn-glycerol 3-phosphate + ADP + H(+). It participates in polyol metabolism; glycerol degradation via glycerol kinase pathway; sn-glycerol 3-phosphate from glycerol: step 1/1. Its activity is regulated as follows. Activated by phosphorylation and inhibited by fructose 1,6-bisphosphate (FBP). In terms of biological role, key enzyme in the regulation of glycerol uptake and metabolism. Catalyzes the phosphorylation of glycerol to yield sn-glycerol 3-phosphate. The chain is Glycerol kinase from Streptococcus gordonii (strain Challis / ATCC 35105 / BCRC 15272 / CH1 / DL1 / V288).